Consider the following 207-residue polypeptide: Large ribosomal subunit protein uL4 (207 aa).

A disordered region spans residues histidine 49–isoleucine 78.

Belongs to the universal ribosomal protein uL4 family. Part of the 50S ribosomal subunit.

Its function is as follows. One of the primary rRNA binding proteins, this protein initially binds near the 5'-end of the 23S rRNA. It is important during the early stages of 50S assembly. It makes multiple contacts with different domains of the 23S rRNA in the assembled 50S subunit and ribosome. Forms part of the polypeptide exit tunnel. This Streptococcus uberis (strain ATCC BAA-854 / 0140J) protein is Large ribosomal subunit protein uL4.